A 50-amino-acid polypeptide reads, in one-letter code: Large ribosomal subunit protein eL39 (50 aa).

It belongs to the eukaryotic ribosomal protein eL39 family.

The sequence is that of Large ribosomal subunit protein eL39 from Methanosphaerula palustris (strain ATCC BAA-1556 / DSM 19958 / E1-9c).